A 676-amino-acid polypeptide reads, in one-letter code: ATP-dependent zinc metalloprotease FTSH 2, chloroplastic (676 aa).

The transit peptide at 1–32 directs the protein to the chloroplast; the sequence is MAPTSMSLAAKTPLPFSTLPSSGVAQRPVSVT. A helical membrane pass occupies residues 155 to 175; sequence LLFNLIGNLAFPLILIGGLFL. An ATP-binding site is contributed by 254–261; it reads GPPGTGKT. Residue H475 coordinates Zn(2+). The active site involves E476. H479 and D553 together coordinate Zn(2+).

In the N-terminal section; belongs to the AAA ATPase family. It in the C-terminal section; belongs to the peptidase M41 family. It depends on Zn(2+) as a cofactor.

It localises to the plastid. The protein resides in the chloroplast thylakoid membrane. Probable ATP-dependent zinc metallopeptidase. The polypeptide is ATP-dependent zinc metalloprotease FTSH 2, chloroplastic (FTSH2) (Oryza sativa subsp. japonica (Rice)).